We begin with the raw amino-acid sequence, 142 residues long: Putative FK506-binding protein 9-like protein (142 aa).

Residues methionine 1 to valine 49 enclose the PPIase FKBP-type domain. EF-hand domains lie at tryptophan 60–serine 95 and aspartate 105–aspartate 140. Ca(2+)-binding residues include aspartate 118, asparagine 120, aspartate 122, lysine 124, and glutamate 129.

The sequence is that of Putative FK506-binding protein 9-like protein (FKBP9P1) from Homo sapiens (Human).